We begin with the raw amino-acid sequence, 300 residues long: Recombination-associated protein RdgC (300 aa).

This sequence belongs to the RdgC family.

It localises to the cytoplasm. Its subcellular location is the nucleoid. May be involved in recombination. The chain is Recombination-associated protein RdgC from Janthinobacterium sp. (strain Marseille) (Minibacterium massiliensis).